A 373-amino-acid chain; its full sequence is Putative F-box/kelch-repeat protein At3g19410 (373 aa).

The region spanning 1-46 is the F-box domain; it reads MTIPELPKDLIEEILCYVPATYLKRLRSTCKGWNRLFKDDRRFAKK. 3 Kelch repeats span residues 101–148, 149–200, and 329–373; these read RIFH…FVLG, YYQE…QCVS, and KLYI…EEKS.

This is Putative F-box/kelch-repeat protein At3g19410 from Arabidopsis thaliana (Mouse-ear cress).